The chain runs to 312 residues: Ribosomal RNA small subunit methyltransferase H (312 aa).

S-adenosyl-L-methionine is bound by residues 33-35, aspartate 52, phenylalanine 81, aspartate 102, and glutamine 109; that span reads GGH.

This sequence belongs to the methyltransferase superfamily. RsmH family.

The protein resides in the cytoplasm. It carries out the reaction cytidine(1402) in 16S rRNA + S-adenosyl-L-methionine = N(4)-methylcytidine(1402) in 16S rRNA + S-adenosyl-L-homocysteine + H(+). In terms of biological role, specifically methylates the N4 position of cytidine in position 1402 (C1402) of 16S rRNA. The chain is Ribosomal RNA small subunit methyltransferase H from Leuconostoc mesenteroides subsp. mesenteroides (strain ATCC 8293 / DSM 20343 / BCRC 11652 / CCM 1803 / JCM 6124 / NCDO 523 / NBRC 100496 / NCIMB 8023 / NCTC 12954 / NRRL B-1118 / 37Y).